A 222-amino-acid polypeptide reads, in one-letter code: Gamma-glutamyl cyclotransferase gliK (222 aa).

A run of 2 helical transmembrane segments spans residues Gly-154–Ile-174 and Gly-187–Gln-207.

The protein belongs to the class-I pyridoxal-phosphate-dependent aminotransferase family.

Its subcellular location is the membrane. It catalyses the reaction an alpha-(gamma-L-glutamyl)-L-amino acid = 5-oxo-L-proline + an L-alpha-amino acid. Its pathway is secondary metabolite biosynthesis. Functionally, gamma-glutamyl cyclotransferase; part of the gene cluster that mediates the biosynthesis of an unusual class of epipolythiodioxopiperazines (ETPs) lacking the reactive thiol group important for toxicity. Firstly, L-tyrosine is prenylated by tcpD, before undergoing condensation with L-glycine in a reaction catalyzed by the NRPS tcpP leading to the diketopiperazine (DKP) backbone. Afterwards the alpha-carbon of tyrosine is oxidized by the cytochrome P450 tcpC to form a hydroxyl group. However, in contrast other ETP biosynthesis pathways studied so far, tcpC is not able to bishydroxylate the DKP at both alpha-carbon positions, but hydroxylates the alpha-carbon of the tyrosine part and the nitrogen of the glycine part. The next steps involve an alpha,beta-elimination reaction catalyzed by tcpI, a methylation by the methyltransferase tcpN the action of the four enzyme cascade tcpG/K/J/I. Due to a dysfunctional cytochrome P450 monooxygenase tcpC, the pathway leads to the biosynthesis of probable non-toxic metabolites lacking the reactive thiol group. The protein is Gamma-glutamyl cyclotransferase gliK of Claviceps purpurea (strain 20.1) (Ergot fungus).